Here is a 360-residue protein sequence, read N- to C-terminus: Membrane-bound lytic murein transglycosylase C (360 aa).

An N-terminal signal peptide occupies residues 1 to 16; the sequence is MKKLLALAVIAPLLIS. Cysteine 17 carries the N-palmitoyl cysteine lipid modification. Residue cysteine 17 is the site of S-diacylglycerol cysteine attachment.

The protein belongs to the transglycosylase Slt family.

It is found in the cell outer membrane. It catalyses the reaction Exolytic cleavage of the (1-&gt;4)-beta-glycosidic linkage between N-acetylmuramic acid (MurNAc) and N-acetylglucosamine (GlcNAc) residues in peptidoglycan, from either the reducing or the non-reducing ends of the peptidoglycan chains, with concomitant formation of a 1,6-anhydrobond in the MurNAc residue.. In terms of biological role, murein-degrading enzyme. May play a role in recycling of muropeptides during cell elongation and/or cell division. The protein is Membrane-bound lytic murein transglycosylase C of Salmonella typhi.